Reading from the N-terminus, the 1116-residue chain is Ubiquitin C-terminal hydrolase 12 (1116 aa).

A compositionally biased stretch (pro residues) spans 1-10 (MTMMTPPPVD). The disordered stretch occupies residues 1–52 (MTMMTPPPVDQPEDEEMLVPNSDLVDGPAQPMEVTQPETAASTVENQPAEDP). The segment covering 36–46 (QPETAASTVEN) has biased composition (polar residues). An MATH domain is found at 54–179 (TLKFTWTIPN…NDTVLVEAEV (126 aa)). One can recognise a USP domain in the interval 199 to 524 (VGLKNQGATC…NAYMLVYIRE (326 aa)). Residue Cys-208 is the Nucleophile of the active site. His-455 serves as the catalytic Proton acceptor.

The protein belongs to the peptidase C19 family. In terms of assembly, interacts with SIC/RON3.

It catalyses the reaction Thiol-dependent hydrolysis of ester, thioester, amide, peptide and isopeptide bonds formed by the C-terminal Gly of ubiquitin (a 76-residue protein attached to proteins as an intracellular targeting signal).. Functionally, recognizes and hydrolyzes the peptide bond at the C-terminal Gly of ubiquitin. Involved in the processing of poly-ubiquitin precursors as well as that of ubiquitinated proteins. Positive regulator of root meristem development that, together with UBP13, prevents the ubiquitination and turnover of RGFR1 induced by the RGF1 hormone peptide, thus influencing PLT1 and PLT2 expression. This chain is Ubiquitin C-terminal hydrolase 12, found in Arabidopsis thaliana (Mouse-ear cress).